Consider the following 255-residue polypeptide: Protein PH0439 (255 aa).

This sequence belongs to the CinA family.

The polypeptide is Protein PH0439 (Pyrococcus horikoshii (strain ATCC 700860 / DSM 12428 / JCM 9974 / NBRC 100139 / OT-3)).